Consider the following 921-residue polypeptide: MDYKDTLNLPKTSFSMRANLVRKEPEQLKKWEEMDLYKYVQKNREGAPLFVLHDGPPYANGNIHVGTALNKILKDFIIKYKTMQGYNAPYIPGWDTHGLPIEHRVASELGEKAKELSKSTIRKKCRKYAEKYVKIQREQFKRLGVRGDWENPYLTFDPKYEASVLKVLSKLVKSGNVYRTLKPIYWCTSCETALAEAEVEYHDHKSYSIYVKFQDKNKPNRFFVIWTTTPWTLPANVAIALNPNFDYCEVKVKDEIWILAEGLLEQAMKAMGIESYEIISTKKGSEFEGEVAQHPFMNRDSVIVMADYVALDAGTGCVHTAPGHGEEDYGTGLRYRLPVISPVNDQGIFTKEAGKYAGLFVFDANPIIVEDLRKSGHLVGEGKIEHSYPHCWRCKNPVIFRATEQWFIDVDKNDLRQKALSEIEKTEWHPSWGQNRITAMVQDRPDWCISRQRSWGIPIPAFRCQDCGESILDGKVIDHFAGIVEEKGTDVWFEWSESDLLPEGYTCPKCGSKNLKKQEDILDVWVDSGSSFEAVVKVMDELRFPADVYIEGSDQHRGWFQSSLLLSVGTEGVAPFKSVITHGFINDEQGRKMSKSLGNAVDPQEINNKYGAEILRLWVASSNYQEDIRISMNIIQQQIENYKKIRNTLRYLLGNLSDYSPQDSVPYEELLELDKWAIMKLHKLIRDVTRYYDRYEFYKVFQSILKFIITDMSAFYLDIIKDRLYVEGKTSPERRSAQTVLFEILVALNKMLAPILTFTSEEVYAHLPEAARNYKTIQVENWPEYKEEYIDSSLEERWEKLINLREDVLKALEIARAEKLIGNSLDAKVTLQIRSKDIDEIVRQYSREFIADLFIVSQVEFAESVEGFNGEYAVVKVDRAEGEKCQRCWKYSIETGADPELPDMCPRCVAVLRKYGSDYEL.

Positions P57–T67 match the 'HIGH' region motif. E551 provides a ligand contact to L-isoleucyl-5'-AMP. The 'KMSKS' region motif lies at K592 to S596. Position 595 (K595) interacts with ATP. 4 residues coordinate Zn(2+): C885, C888, C905, and C908.

The protein belongs to the class-I aminoacyl-tRNA synthetase family. IleS type 1 subfamily. In terms of assembly, monomer. It depends on Zn(2+) as a cofactor.

It localises to the cytoplasm. The enzyme catalyses tRNA(Ile) + L-isoleucine + ATP = L-isoleucyl-tRNA(Ile) + AMP + diphosphate. Catalyzes the attachment of isoleucine to tRNA(Ile). As IleRS can inadvertently accommodate and process structurally similar amino acids such as valine, to avoid such errors it has two additional distinct tRNA(Ile)-dependent editing activities. One activity is designated as 'pretransfer' editing and involves the hydrolysis of activated Val-AMP. The other activity is designated 'posttransfer' editing and involves deacylation of mischarged Val-tRNA(Ile). The chain is Isoleucine--tRNA ligase from Kosmotoga olearia (strain ATCC BAA-1733 / DSM 21960 / TBF 19.5.1).